We begin with the raw amino-acid sequence, 680 residues long: Probable Xaa-Pro aminopeptidase P (680 aa).

4 residues coordinate Mn(2+): D477, D488, E586, and E600.

The protein belongs to the peptidase M24B family. The cofactor is Mn(2+).

The enzyme catalyses Release of any N-terminal amino acid, including proline, that is linked to proline, even from a dipeptide or tripeptide.. In terms of biological role, catalyzes the removal of a penultimate prolyl residue from the N-termini of peptides. The polypeptide is Probable Xaa-Pro aminopeptidase P (AMPP) (Podospora anserina (strain S / ATCC MYA-4624 / DSM 980 / FGSC 10383) (Pleurage anserina)).